Here is a 348-residue protein sequence, read N- to C-terminus: tRNA N6-adenosine threonylcarbamoyltransferase (348 aa).

Residues histidine 115 and histidine 119 each contribute to the Fe cation site. Residues 138–142 (LVSGG), aspartate 171, glycine 184, and asparagine 276 contribute to the substrate site. Position 304 (aspartate 304) interacts with Fe cation.

The protein belongs to the KAE1 / TsaD family. The cofactor is Fe(2+).

The protein localises to the cytoplasm. The enzyme catalyses L-threonylcarbamoyladenylate + adenosine(37) in tRNA = N(6)-L-threonylcarbamoyladenosine(37) in tRNA + AMP + H(+). Functionally, required for the formation of a threonylcarbamoyl group on adenosine at position 37 (t(6)A37) in tRNAs that read codons beginning with adenine. Is involved in the transfer of the threonylcarbamoyl moiety of threonylcarbamoyl-AMP (TC-AMP) to the N6 group of A37, together with TsaE and TsaB. TsaD likely plays a direct catalytic role in this reaction. The polypeptide is tRNA N6-adenosine threonylcarbamoyltransferase (Xylella fastidiosa (strain 9a5c)).